Here is a 69-residue protein sequence, read N- to C-terminus: Guanine nucleotide-binding protein G(I)/G(S)/G(O) subunit gamma-T2 (69 aa).

Cys-66 carries the post-translational modification Cysteine methyl ester. Residue Cys-66 is the site of S-farnesyl cysteine attachment. The propeptide at 67–69 (VLS) is removed in mature form.

Belongs to the G protein gamma family. As to quaternary structure, g proteins are composed of 3 units, alpha, beta and gamma.

The protein resides in the cell membrane. In terms of biological role, guanine nucleotide-binding proteins (G proteins) are involved as a modulator or transducer in various transmembrane signaling systems. The beta and gamma chains are required for the GTPase activity, for replacement of GDP by GTP, and for G protein-effector interaction. The polypeptide is Guanine nucleotide-binding protein G(I)/G(S)/G(O) subunit gamma-T2 (Gngt2) (Mus musculus (Mouse)).